We begin with the raw amino-acid sequence, 166 residues long: Glutamyl-tRNA(Gln) amidotransferase subunit C-2, mitochondrial (166 aa).

The protein belongs to the GatC family. As to quaternary structure, subunit of the heterotrimeric GatCAB amidotransferase (AdT) complex, composed of A, B and C subunits.

It is found in the mitochondrion. It carries out the reaction L-glutamyl-tRNA(Gln) + L-glutamine + ATP + H2O = L-glutaminyl-tRNA(Gln) + L-glutamate + ADP + phosphate + H(+). In terms of biological role, allows the formation of correctly charged Gln-tRNA(Gln) through the transamidation of misacylated Glu-tRNA(Gln) in the mitochondria. The reaction takes place in the presence of glutamine and ATP through an activated gamma-phospho-Glu-tRNA(Gln). The sequence is that of Glutamyl-tRNA(Gln) amidotransferase subunit C-2, mitochondrial from Culex quinquefasciatus (Southern house mosquito).